A 700-amino-acid polypeptide reads, in one-letter code: Elongation factor G 1 (700 aa).

Positions 8 to 290 (ERYRNIGISA…AVIEYLPSPI (283 aa)) constitute a tr-type G domain. Residues 17–24 (AHIDAGKT), 88–92 (DTPGH), and 142–145 (NKMD) contribute to the GTP site.

It belongs to the TRAFAC class translation factor GTPase superfamily. Classic translation factor GTPase family. EF-G/EF-2 subfamily.

It is found in the cytoplasm. Catalyzes the GTP-dependent ribosomal translocation step during translation elongation. During this step, the ribosome changes from the pre-translocational (PRE) to the post-translocational (POST) state as the newly formed A-site-bound peptidyl-tRNA and P-site-bound deacylated tRNA move to the P and E sites, respectively. Catalyzes the coordinated movement of the two tRNA molecules, the mRNA and conformational changes in the ribosome. This is Elongation factor G 1 from Bordetella avium (strain 197N).